We begin with the raw amino-acid sequence, 612 residues long: Probable cytosolic Fe-S cluster assembly factor SJAG_02895 (612 aa).

Residue 13–20 (GKGGVGKS) coordinates ATP. [4Fe-4S] cluster is bound by residues cysteine 200 and cysteine 203. WD repeat units follow at residues 287-326 (GHRG…LIHV), 330-370 (YHTR…WECV), 375-414 (GHEN…EFDC), 420-459 (EHTQ…WVQT), 464-503 (SHTS…EDAA), 528-566 (TFTE…STWH), and 574-612 (AHDV…DQTA).

The protein in the N-terminal section; belongs to the Mrp/NBP35 ATP-binding proteins family. NUBP2/CFD1 subfamily. In the C-terminal section; belongs to the WD repeat CIA1 family. As to quaternary structure, heterotetramer of 2 nbp35 and 2 SJAG_02895 chains. [4Fe-4S] cluster serves as cofactor.

The protein localises to the cytoplasm. It is found in the nucleus. In terms of biological role, fusion protein of two essential components of the cytosolic iron-sulfur (Fe/S) protein assembly (CIA) machinery. Required for maturation of extramitochondrial Fe-S proteins. May form a heterotetramer with nubp35, functioning as a Fe-S scaffold complex, mediating the de novo assembly of an Fe-S cluster and its transfer to target apoproteins. The protein is Probable cytosolic Fe-S cluster assembly factor SJAG_02895 of Schizosaccharomyces japonicus (strain yFS275 / FY16936) (Fission yeast).